A 307-amino-acid polypeptide reads, in one-letter code: 2-methoxy-6-polyprenyl-1,4-benzoquinol methylase, mitochondrial (307 aa).

Residues 1–19 (MLISSRIVRSSLVNVPLRL) constitute a mitochondrion transit peptide. S-adenosyl-L-methionine is bound by residues Ser122, Asp148, 179 to 180 (NG), and Ser197.

It belongs to the class I-like SAM-binding methyltransferase superfamily. MenG/UbiE family. As to quaternary structure, component of a multi-subunit COQ enzyme complex, composed of at least COQ3, COQ4, COQ5, COQ6, COQ7 and COQ9. Interacts with COQ3.

Its subcellular location is the mitochondrion inner membrane. The enzyme catalyses 2-methoxy-6-(all-trans-hexaprenyl)benzene-1,4-diol + S-adenosyl-L-methionine = 5-methoxy-2-methyl-3-(all-trans-hexaprenyl)benzene-1,4-diol + S-adenosyl-L-homocysteine + H(+). The protein operates within cofactor biosynthesis; ubiquinone biosynthesis. Functionally, methyltransferase required for the conversion of 2-hexaprenyl-6-methoxy-1,4-benzoquinol (DDMQH2) to 2-hexaprenyl-3-methyl-6-methoxy-1,4-benzoquinol (DMQH2). This chain is 2-methoxy-6-polyprenyl-1,4-benzoquinol methylase, mitochondrial, found in Saccharomyces cerevisiae (strain ATCC 204508 / S288c) (Baker's yeast).